A 461-amino-acid chain; its full sequence is Bifunctional protein GlmU (461 aa).

Residues 1 to 230 (MSKIHAVVLA…PEETLGVNDR (230 aa)) form a pyrophosphorylase region. UDP-N-acetyl-alpha-D-glucosamine is bound by residues 9 to 12 (LAAG), Lys23, Gln73, 78 to 79 (GT), 101 to 103 (YGD), Gly140, Glu155, Asn170, and Asn228. Asp103 serves as a coordination point for Mg(2+). Asn228 is a binding site for Mg(2+). A linker region spans residues 231–251 (VQLSEAEAYMKKRIMTGHMRN). The N-acetyltransferase stretch occupies residues 252 to 461 (GVTIIDPTST…KMPRKGKKQS (210 aa)). UDP-N-acetyl-alpha-D-glucosamine-binding residues include Arg333 and Lys351. The active-site Proton acceptor is the His363. 2 residues coordinate UDP-N-acetyl-alpha-D-glucosamine: Tyr366 and Asn377. Acetyl-CoA-binding positions include 386–387 (NY), Ala423, and Arg440.

The protein in the N-terminal section; belongs to the N-acetylglucosamine-1-phosphate uridyltransferase family. This sequence in the C-terminal section; belongs to the transferase hexapeptide repeat family. In terms of assembly, homotrimer. Mg(2+) is required as a cofactor.

It is found in the cytoplasm. It catalyses the reaction alpha-D-glucosamine 1-phosphate + acetyl-CoA = N-acetyl-alpha-D-glucosamine 1-phosphate + CoA + H(+). The enzyme catalyses N-acetyl-alpha-D-glucosamine 1-phosphate + UTP + H(+) = UDP-N-acetyl-alpha-D-glucosamine + diphosphate. Its pathway is nucleotide-sugar biosynthesis; UDP-N-acetyl-alpha-D-glucosamine biosynthesis; N-acetyl-alpha-D-glucosamine 1-phosphate from alpha-D-glucosamine 6-phosphate (route II): step 2/2. It participates in nucleotide-sugar biosynthesis; UDP-N-acetyl-alpha-D-glucosamine biosynthesis; UDP-N-acetyl-alpha-D-glucosamine from N-acetyl-alpha-D-glucosamine 1-phosphate: step 1/1. It functions in the pathway bacterial outer membrane biogenesis; LPS lipid A biosynthesis. Catalyzes the last two sequential reactions in the de novo biosynthetic pathway for UDP-N-acetylglucosamine (UDP-GlcNAc). The C-terminal domain catalyzes the transfer of acetyl group from acetyl coenzyme A to glucosamine-1-phosphate (GlcN-1-P) to produce N-acetylglucosamine-1-phosphate (GlcNAc-1-P), which is converted into UDP-GlcNAc by the transfer of uridine 5-monophosphate (from uridine 5-triphosphate), a reaction catalyzed by the N-terminal domain. This chain is Bifunctional protein GlmU, found in Brevibacillus brevis (strain 47 / JCM 6285 / NBRC 100599).